The following is a 146-amino-acid chain: D-aminoacyl-tRNA deacylase (146 aa).

Positions 138–139 match the Gly-cisPro motif, important for rejection of L-amino acids motif; the sequence is GP.

Belongs to the DTD family. Homodimer.

It localises to the cytoplasm. The enzyme catalyses glycyl-tRNA(Ala) + H2O = tRNA(Ala) + glycine + H(+). It carries out the reaction a D-aminoacyl-tRNA + H2O = a tRNA + a D-alpha-amino acid + H(+). In terms of biological role, an aminoacyl-tRNA editing enzyme that deacylates mischarged D-aminoacyl-tRNAs. Also deacylates mischarged glycyl-tRNA(Ala), protecting cells against glycine mischarging by AlaRS. Acts via tRNA-based rather than protein-based catalysis; rejects L-amino acids rather than detecting D-amino acids in the active site. By recycling D-aminoacyl-tRNA to D-amino acids and free tRNA molecules, this enzyme counteracts the toxicity associated with the formation of D-aminoacyl-tRNA entities in vivo and helps enforce protein L-homochirality. The polypeptide is D-aminoacyl-tRNA deacylase (Xanthomonas oryzae pv. oryzae (strain MAFF 311018)).